Consider the following 210-residue polypeptide: MRRVFCVLYMPIMSTAIRLIAGLGNPGPDYETTRHNAGFWLADHLADDLRATFALEKSFFGMVAKARHAGENVLLVKPITYMNRSGQAVGALARFYKLAPEQVLVLHDELDLLPGQVKLKQGGGHAGHNGLKDIQAALGSPNFWRLRIGIGHPRTLGLAQQVADFVLHPPRRDEQTAIDDVIHRCRAVVPAMLDGDFALATRQLHSGNGA.

Position 30 (Y30) interacts with tRNA. H35 functions as the Proton acceptor in the catalytic mechanism. TRNA contacts are provided by Y81, N83, and N129.

The protein belongs to the PTH family. Monomer.

The protein localises to the cytoplasm. The catalysed reaction is an N-acyl-L-alpha-aminoacyl-tRNA + H2O = an N-acyl-L-amino acid + a tRNA + H(+). In terms of biological role, hydrolyzes ribosome-free peptidyl-tRNAs (with 1 or more amino acids incorporated), which drop off the ribosome during protein synthesis, or as a result of ribosome stalling. Catalyzes the release of premature peptidyl moieties from peptidyl-tRNA molecules trapped in stalled 50S ribosomal subunits, and thus maintains levels of free tRNAs and 50S ribosomes. The sequence is that of Peptidyl-tRNA hydrolase from Bordetella petrii (strain ATCC BAA-461 / DSM 12804 / CCUG 43448).